The sequence spans 310 residues: Protein N-terminal asparagine amidohydrolase (310 aa).

As to quaternary structure, monomer.

Its subcellular location is the cytoplasm. It carries out the reaction N-terminal L-asparaginyl-[protein] + H2O + H(+) = N-terminal L-aspartyl-[protein] + NH4(+). Its activity is regulated as follows. Inhibited by micromolar concentrations of copper and zinc ions. Its function is as follows. N-terminal asparagine deamidase that mediates deamidation of N-terminal asparagine residues to aspartate. Required for the ubiquitin-dependent turnover of intracellular proteins that initiate with Met-Asn. These proteins are acetylated on the retained initiator methionine and can subsequently be modified by the removal of N-acetyl methionine by acylaminoacid hydrolase (AAH). Conversion of the resulting N-terminal asparagine to aspartate by NTAN1/PNAD renders the protein susceptible to arginylation, polyubiquitination and degradation as specified by the N-end rule. This enzyme does not act on substrates with internal or C-terminal asparagines and does not act on glutamine residues in any position, nor on acetylated N-terminal peptidyl Asn. This Homo sapiens (Human) protein is Protein N-terminal asparagine amidohydrolase (NTAN1).